Reading from the N-terminus, the 1343-residue chain is DNA-directed RNA polymerase subunit beta (1343 aa).

It belongs to the RNA polymerase beta chain family. As to quaternary structure, the RNAP catalytic core consists of 2 alpha, 1 beta, 1 beta' and 1 omega subunit. When a sigma factor is associated with the core the holoenzyme is formed, which can initiate transcription.

It catalyses the reaction RNA(n) + a ribonucleoside 5'-triphosphate = RNA(n+1) + diphosphate. Functionally, DNA-dependent RNA polymerase catalyzes the transcription of DNA into RNA using the four ribonucleoside triphosphates as substrates. The protein is DNA-directed RNA polymerase subunit beta of Shewanella denitrificans (strain OS217 / ATCC BAA-1090 / DSM 15013).